The following is a 498-amino-acid chain: Glutamate--tRNA ligase (498 aa).

The 'HIGH' region motif lies at 11–21 (PSPTGHLHIGN). The 'KMSKS' region motif lies at 261-265 (KLSKR). Position 264 (lysine 264) interacts with ATP.

It belongs to the class-I aminoacyl-tRNA synthetase family. Glutamate--tRNA ligase type 1 subfamily. In terms of assembly, monomer.

It is found in the cytoplasm. It carries out the reaction tRNA(Glu) + L-glutamate + ATP = L-glutamyl-tRNA(Glu) + AMP + diphosphate. Catalyzes the attachment of glutamate to tRNA(Glu) in a two-step reaction: glutamate is first activated by ATP to form Glu-AMP and then transferred to the acceptor end of tRNA(Glu). In Oenococcus oeni (strain ATCC BAA-331 / PSU-1), this protein is Glutamate--tRNA ligase.